Here is a 652-residue protein sequence, read N- to C-terminus: Threonine--tRNA ligase (652 aa).

One can recognise a TGS domain in the interval 1 to 63 (MAEISLTFPD…TESGDFQLIT (63 aa)). A catalytic region spans residues 246–545 (DHRVIGRDLD…LIEMYKGAFP (300 aa)). Residues Cys-340, His-391, and His-522 each coordinate Zn(2+).

This sequence belongs to the class-II aminoacyl-tRNA synthetase family. In terms of assembly, homodimer. Requires Zn(2+) as cofactor.

The protein localises to the cytoplasm. It catalyses the reaction tRNA(Thr) + L-threonine + ATP = L-threonyl-tRNA(Thr) + AMP + diphosphate + H(+). Functionally, catalyzes the attachment of threonine to tRNA(Thr) in a two-step reaction: L-threonine is first activated by ATP to form Thr-AMP and then transferred to the acceptor end of tRNA(Thr). Also edits incorrectly charged L-seryl-tRNA(Thr). The sequence is that of Threonine--tRNA ligase from Leuconostoc mesenteroides subsp. mesenteroides (strain ATCC 8293 / DSM 20343 / BCRC 11652 / CCM 1803 / JCM 6124 / NCDO 523 / NBRC 100496 / NCIMB 8023 / NCTC 12954 / NRRL B-1118 / 37Y).